The primary structure comprises 877 residues: Alanine--tRNA ligase (877 aa).

Residues histidine 564, histidine 568, cysteine 666, and histidine 670 each coordinate Zn(2+).

Belongs to the class-II aminoacyl-tRNA synthetase family. It depends on Zn(2+) as a cofactor.

Its subcellular location is the cytoplasm. It catalyses the reaction tRNA(Ala) + L-alanine + ATP = L-alanyl-tRNA(Ala) + AMP + diphosphate. Its function is as follows. Catalyzes the attachment of alanine to tRNA(Ala) in a two-step reaction: alanine is first activated by ATP to form Ala-AMP and then transferred to the acceptor end of tRNA(Ala). Also edits incorrectly charged Ser-tRNA(Ala) and Gly-tRNA(Ala) via its editing domain. The sequence is that of Alanine--tRNA ligase from Pelotomaculum thermopropionicum (strain DSM 13744 / JCM 10971 / SI).